Consider the following 379-residue polypeptide: ATP-sensitive inward rectifier potassium channel 10 (379 aa).

At 1–61 (MTSVAKVYYS…LKDLWTTFID (61 aa)) the chain is on the cytoplasmic side. A 1,2-dioctanoyl-sn-glycero-3-phospho-(1D-myo-inositol-4,5-bisphosphate)-binding site is contributed by Arg-36. The chain crosses the membrane as a helical span at residues 62-88 (MQWRYKLLLFSATFAGTWFLFGVVWYL). Over 89–114 (VAVAHGDLLELDPPANHTPCVVQVHT) the chain is Extracellular. Cys-108 and Cys-140 form a disulfide bridge. The discontinuously helical; Pore-forming intramembrane region spans 115–131 (LTGAFLFSLESQTTIGY). Residues 128-133 (TIGYGF) carry the Selectivity filter motif. The Extracellular portion of the chain corresponds to 132-140 (GFRYISEEC). The chain crosses the membrane as a helical span at residues 141-166 (PLAIVLLIAQLVLTTILEIFITGTFL). Residues 167 to 379 (AKIARPKKRA…SALSVRISNV (213 aa)) lie on the Cytoplasmic side of the membrane. Residues Lys-168, Arg-171, and Lys-173 each contribute to the 1,2-dioctanoyl-sn-glycero-3-phospho-(1D-myo-inositol-4,5-bisphosphate) site. Position 210-217 (210-217 (GCQVTGKL)) interacts with ATP.

It belongs to the inward rectifier-type potassium channel (TC 1.A.2.1) family. KCNJ10 subfamily. In terms of assembly, homotetramer. In kidney cells, it forms heteromeric channels with Kir5.1/KCNJ16; this interaction is required for KCNJ16 localization to the basolateral membrane. Interacts with MAGI1, alone and possibly as a heteromer with KCNJ16; this interaction may facilitate KCNJ10/KCNJ16 potassium channel expression at the basolateral membrane in kidney cells. Interacts with PATJ. As to expression, expressed in kidney (at protein level). In the nephron, expressed in the distal convoluted tubule, the connecting tubule, the collecting duct and cortical thick ascending limbs.

The protein localises to the membrane. The protein resides in the basolateral cell membrane. The catalysed reaction is K(+)(in) = K(+)(out). Its activity is regulated as follows. Channel activity is strongly regulated by variations of cytosolic pH; channels are activated by alkaline and inhibited by acidic pH values. Inhibited by Ba(2+) and Cs(+). Activated by phosphatidylinositol 4,5 biphosphate (PtdIns(4,5)P2). Functionally, may be responsible for potassium buffering action of glial cells in the brain. Inward rectifier potassium channels are characterized by a greater tendency to allow potassium to flow into the cell rather than out of it. Their voltage dependence is regulated by the concentration of extracellular potassium; as external potassium is raised, the voltage range of the channel opening shifts to more positive voltages. The inward rectification is mainly due to the blockage of outward current by internal magnesium. Can be blocked by extracellular barium and cesium. In the kidney, together with KCNJ16, mediates basolateral K(+) recycling in distal tubules; this process is critical for Na(+) reabsorption at the tubules. The protein is ATP-sensitive inward rectifier potassium channel 10 of Homo sapiens (Human).